Reading from the N-terminus, the 647-residue chain is DNA polymerase subunit gamma-1 (647 aa).

Residues 116 to 147 (ERPGRAEQSQMQDEDGLPELVEESSQPSFHHG) form a disordered region. The segment covering 127-137 (QDEDGLPELVE) has biased composition (acidic residues).

The protein belongs to the DNA polymerase type-A family. Heterotrimer composed of a catalytic subunit and a homodimer of accessory subunits. Interacts with TTC3. Mg(2+) is required as a cofactor.

The protein resides in the mitochondrion. It is found in the mitochondrion matrix. It localises to the mitochondrion nucleoid. The catalysed reaction is DNA(n) + a 2'-deoxyribonucleoside 5'-triphosphate = DNA(n+1) + diphosphate. Involved in the replication of mitochondrial DNA. Associates with mitochondrial DNA. This Gallus gallus (Chicken) protein is DNA polymerase subunit gamma-1 (POLG).